A 558-amino-acid polypeptide reads, in one-letter code: Putative ABC transporter ATP-binding protein gbs1680 (558 aa).

ABC transporter domains are found at residues isoleucine 5–glutamate 246 and leucine 295–lysine 527. ATP contacts are provided by residues glycine 39 to serine 46 and glycine 328 to serine 335.

The protein belongs to the ABC transporter superfamily.

The protein resides in the cell membrane. Probably part of an ABC transporter complex. Responsible for energy coupling to the transport system. The polypeptide is Putative ABC transporter ATP-binding protein gbs1680 (Streptococcus agalactiae serotype III (strain NEM316)).